Reading from the N-terminus, the 156-residue chain is Putative type II restriction enzyme ApeKORF2002P (156 aa).

The protein to M.jannaschii MJ1199.

The catalysed reaction is Endonucleolytic cleavage of DNA to give specific double-stranded fragments with terminal 5'-phosphates.. In terms of biological role, a putative type II restriction enzyme, its methylase would be APE_2002. The sequence is that of Putative type II restriction enzyme ApeKORF2002P from Aeropyrum pernix (strain ATCC 700893 / DSM 11879 / JCM 9820 / NBRC 100138 / K1).